The following is a 378-amino-acid chain: Phospho-N-acetylmuramoyl-pentapeptide-transferase (378 aa).

Helical transmembrane passes span 26–46 (LFRL…TGAN), 57–77 (LPWL…VPLL), 103–123 (MGGI…TGFA), 127–147 (LSPT…IGWW), 171–191 (GIGA…ATVV), 195–215 (WGWV…VPMA), 225–245 (GLDG…GIIL), 247–267 (PYPD…GFLW), 275–295 (VFMG…IGLA), 302–322 (LLIV…QVLY), and 356–376 (IVRT…LLQW).

This sequence belongs to the glycosyltransferase 4 family. MraY subfamily. It depends on Mg(2+) as a cofactor.

Its subcellular location is the cell inner membrane. It carries out the reaction UDP-N-acetyl-alpha-D-muramoyl-L-alanyl-gamma-D-glutamyl-meso-2,6-diaminopimeloyl-D-alanyl-D-alanine + di-trans,octa-cis-undecaprenyl phosphate = di-trans,octa-cis-undecaprenyl diphospho-N-acetyl-alpha-D-muramoyl-L-alanyl-D-glutamyl-meso-2,6-diaminopimeloyl-D-alanyl-D-alanine + UMP. Its pathway is cell wall biogenesis; peptidoglycan biosynthesis. Functionally, catalyzes the initial step of the lipid cycle reactions in the biosynthesis of the cell wall peptidoglycan: transfers peptidoglycan precursor phospho-MurNAc-pentapeptide from UDP-MurNAc-pentapeptide onto the lipid carrier undecaprenyl phosphate, yielding undecaprenyl-pyrophosphoryl-MurNAc-pentapeptide, known as lipid I. The chain is Phospho-N-acetylmuramoyl-pentapeptide-transferase from Thermosynechococcus vestitus (strain NIES-2133 / IAM M-273 / BP-1).